Consider the following 220-residue polypeptide: 7-cyano-7-deazaguanine synthase (220 aa).

F10–L20 is an ATP binding site. C186, C195, C198, and C201 together coordinate Zn(2+).

It belongs to the QueC family. Homodimer. Requires Zn(2+) as cofactor.

The catalysed reaction is 7-carboxy-7-deazaguanine + NH4(+) + ATP = 7-cyano-7-deazaguanine + ADP + phosphate + H2O + H(+). The protein operates within purine metabolism; 7-cyano-7-deazaguanine biosynthesis. Catalyzes the ATP-dependent conversion of 7-carboxy-7-deazaguanine (CDG) to 7-cyano-7-deazaguanine (preQ(0)). The polypeptide is 7-cyano-7-deazaguanine synthase (Bacillus cereus (strain ATCC 14579 / DSM 31 / CCUG 7414 / JCM 2152 / NBRC 15305 / NCIMB 9373 / NCTC 2599 / NRRL B-3711)).